We begin with the raw amino-acid sequence, 355 residues long: Erythronate-4-phosphate dehydrogenase (355 aa).

2 residues coordinate substrate: Ser-45 and Thr-66. Asp-146 is an NAD(+) binding site. Arg-206 is a catalytic residue. Asp-229 is an NAD(+) binding site. Glu-234 is an active-site residue. His-251 functions as the Proton donor in the catalytic mechanism. Gly-254 provides a ligand contact to NAD(+). Residue Tyr-255 coordinates substrate.

The protein belongs to the D-isomer specific 2-hydroxyacid dehydrogenase family. PdxB subfamily. Homodimer.

Its subcellular location is the cytoplasm. The catalysed reaction is 4-phospho-D-erythronate + NAD(+) = (R)-3-hydroxy-2-oxo-4-phosphooxybutanoate + NADH + H(+). Its pathway is cofactor biosynthesis; pyridoxine 5'-phosphate biosynthesis; pyridoxine 5'-phosphate from D-erythrose 4-phosphate: step 2/5. Its function is as follows. Catalyzes the oxidation of erythronate-4-phosphate to 3-hydroxy-2-oxo-4-phosphonooxybutanoate. The protein is Erythronate-4-phosphate dehydrogenase of Acinetobacter baylyi (strain ATCC 33305 / BD413 / ADP1).